The sequence spans 946 residues: Bifunctional glutamine synthetase adenylyltransferase/adenylyl-removing enzyme (946 aa).

The tract at residues 1–440 (MKPLSSPLQQ…VFNELIGDDE (440 aa)) is adenylyl removase. The segment at 449 to 946 (SEQWRELWQD…ASWQKWLVEE (498 aa)) is adenylyl transferase.

The protein belongs to the GlnE family. Requires Mg(2+) as cofactor.

The enzyme catalyses [glutamine synthetase]-O(4)-(5'-adenylyl)-L-tyrosine + phosphate = [glutamine synthetase]-L-tyrosine + ADP. It catalyses the reaction [glutamine synthetase]-L-tyrosine + ATP = [glutamine synthetase]-O(4)-(5'-adenylyl)-L-tyrosine + diphosphate. In terms of biological role, involved in the regulation of glutamine synthetase GlnA, a key enzyme in the process to assimilate ammonia. When cellular nitrogen levels are high, the C-terminal adenylyl transferase (AT) inactivates GlnA by covalent transfer of an adenylyl group from ATP to specific tyrosine residue of GlnA, thus reducing its activity. Conversely, when nitrogen levels are low, the N-terminal adenylyl removase (AR) activates GlnA by removing the adenylyl group by phosphorolysis, increasing its activity. The regulatory region of GlnE binds the signal transduction protein PII (GlnB) which indicates the nitrogen status of the cell. In Escherichia coli O81 (strain ED1a), this protein is Bifunctional glutamine synthetase adenylyltransferase/adenylyl-removing enzyme.